A 67-amino-acid polypeptide reads, in one-letter code: Teratocyte protein CftICK-II (67 aa).

The N-terminal stretch at 1 to 25 (MVKSLLFAIGYLIFLLVTRVNVINA) is a signal peptide. 3 disulfide bridges follow: cysteine 28/cysteine 42, cysteine 35/cysteine 46, and cysteine 41/cysteine 57.

Abundantly expressed by teratocytes, which are extra-embryonic cells released by parasitoid wasps into their hosts during larval eclosion.

The protein resides in the secreted. Its function is as follows. This endoparasitoid wasp peptide has immununosuppressive, antimicrobial and insecticidal activities. Suppress cellular immunity which is detectable as a reduction of hemocyte encapsulation in the host. Shows moderate antifungal activity against C.albicans (MIC=4 ug/ml). In vivo, ingestion of this peptide (probably at excessive doses) increases larval mortality and reduces leaf consumption of D.saccharalis, a permissive host for C.flavipes. This is Teratocyte protein CftICK-II from Cotesia flavipes (Parasitic wasp).